The following is a 403-amino-acid chain: Para-nitrophenol 4-monooxygenase (403 aa).

FAD-binding positions include Gly-6–Ala-35 and Phe-279–Asp-289.

Belongs to the PheA/TfdB FAD monooxygenase family. In terms of assembly, monomer. The cofactor is FAD.

It catalyses the reaction 4-nitrophenol + NADPH + O2 + H(+) = 1,4-benzoquinone + nitrite + NADP(+) + H2O. The protein operates within xenobiotic degradation; 4-nitrophenol degradation. Its function is as follows. Involved in the degradation of para-nitrophenol (4-NP). Catalyzes oxidation of 4-nitrophenol (4-NP) at position 4 with concomitant removal of the nitro group as nitrite and production of para-benzoquinone. This is Para-nitrophenol 4-monooxygenase (pnpA) from Pseudomonas sp. (strain WBC-3).